A 134-amino-acid polypeptide reads, in one-letter code: Methylglyoxal synthase (134 aa).

The MGS-like domain occupies 1-134 (MHIALIAHDE…DWRDLRRNDE (134 aa)). Residues His-8, Lys-12, 34-37 (TGTT), and 54-55 (SG) each bind substrate. The Proton donor/acceptor role is filled by Asp-60. His-87 provides a ligand contact to substrate.

This sequence belongs to the methylglyoxal synthase family.

The enzyme catalyses dihydroxyacetone phosphate = methylglyoxal + phosphate. Its function is as follows. Catalyzes the formation of methylglyoxal from dihydroxyacetone phosphate. The sequence is that of Methylglyoxal synthase from Listeria innocua serovar 6a (strain ATCC BAA-680 / CLIP 11262).